Consider the following 383-residue polypeptide: Probable L-tyrosine/L-aspartate decarboxylase (383 aa).

Lys-227 carries the N6-(pyridoxal phosphate)lysine modification.

The protein belongs to the group II decarboxylase family. MfnA subfamily. It depends on pyridoxal 5'-phosphate as a cofactor.

It carries out the reaction L-tyrosine + H(+) = tyramine + CO2. The enzyme catalyses L-aspartate + H(+) = beta-alanine + CO2. It functions in the pathway cofactor biosynthesis; methanofuran biosynthesis. Its pathway is cofactor biosynthesis; coenzyme A biosynthesis. Functionally, catalyzes the decarboxylation of L-tyrosine to produce tyramine for methanofuran biosynthesis. Can also catalyze the decarboxylation of L-aspartate to produce beta-alanine for coenzyme A (CoA) biosynthesis. The polypeptide is Probable L-tyrosine/L-aspartate decarboxylase (Methanothrix thermoacetophila (strain DSM 6194 / JCM 14653 / NBRC 101360 / PT) (Methanosaeta thermophila)).